A 496-amino-acid polypeptide reads, in one-letter code: UDP-glycosyltransferase 84A2 (496 aa).

Residue His-23 is the Proton acceptor of the active site. His-23 serves as a coordination point for an anthocyanidin. The UDP-alpha-D-glucose site is built by Gln-352, His-367, Trp-370, Asn-371, Ser-372, and Glu-375. An an anthocyanidin-binding site is contributed by Gly-390. UDP-alpha-D-glucose-binding residues include Asp-391 and Gln-392.

It belongs to the UDP-glycosyltransferase family. Expressed in roots, cotyledons, leaf veins and trichomes.

The catalysed reaction is (E)-sinapate + UDP-alpha-D-glucose = 1-O-(trans-sinapoyl)-beta-D-glucose + UDP. Sinapate glucosyltransferase (SGT) required for the biosynthesis of the glucose ester sinapoylglucose and subsequently sinapoylmalate and sinapoylcholine. Is the major SGT activity in plant. Plays an important role in sinapoylation of anthocyanins. Sinapoylglucose produced by UGT84A2 is a significant source of sinapoyl moieties for anthocyanins. Indole-3-butyric acid (IBA)-specific glucosyltransferase that catalyzes the glucosylation of the auxin IBA, but not indole-3-acetic acid (IAA). May be involved in flowering regulation through IBA-mediated transcriptional repression of the auxin-response factors ARF6 and ARF8 and downstream flowering pathway genes. Can glucosylate the phytotoxic xenobiotic compound 2,4,5-trichlorophenol (TCP). This is UDP-glycosyltransferase 84A2 from Arabidopsis thaliana (Mouse-ear cress).